An 84-amino-acid polypeptide reads, in one-letter code: Replication regulatory protein repA2 (84 aa).

Over residues 1-13 the composition is skewed to polar residues; that stretch reads MSQTENAVTSSSG. Residues 1–31 are disordered; the sequence is MSQTENAVTSSSGAKRAYRKGNPLSDAEKQR.

In terms of biological role, this protein is involved in the determination of copy number in gene replication. It binds to the repA promoter thus inhibiting the synthesis of the mRNA for the initiator protein RepA. This Escherichia coli protein is Replication regulatory protein repA2 (repA2).